The sequence spans 349 residues: N-acetyl-gamma-glutamyl-phosphate reductase (349 aa).

The active site involves Cys149.

It belongs to the NAGSA dehydrogenase family. Type 1 subfamily.

It is found in the cytoplasm. The enzyme catalyses N-acetyl-L-glutamate 5-semialdehyde + phosphate + NADP(+) = N-acetyl-L-glutamyl 5-phosphate + NADPH + H(+). It participates in amino-acid biosynthesis; L-arginine biosynthesis; N(2)-acetyl-L-ornithine from L-glutamate: step 3/4. Catalyzes the NADPH-dependent reduction of N-acetyl-5-glutamyl phosphate to yield N-acetyl-L-glutamate 5-semialdehyde. This chain is N-acetyl-gamma-glutamyl-phosphate reductase, found in Acinetobacter baumannii (strain AB307-0294).